The primary structure comprises 142 residues: Large-conductance mechanosensitive channel (142 aa).

The next 2 membrane-spanning stretches (helical) occupy residues 14-34 (VMDLAVGVIIGAAFSKIVDSV) and 82-102 (GNFITVFINFLILAWIIFLLI).

This sequence belongs to the MscL family. In terms of assembly, homopentamer.

The protein localises to the cell inner membrane. Channel that opens in response to stretch forces in the membrane lipid bilayer. May participate in the regulation of osmotic pressure changes within the cell. The polypeptide is Large-conductance mechanosensitive channel (Sinorhizobium medicae (strain WSM419) (Ensifer medicae)).